The following is a 255-amino-acid chain: Aliphatic sulfonates import ATP-binding protein SsuB (255 aa).

In terms of domain architecture, ABC transporter spans 12–233 (LLLNAVSKHY…RLGSVRLAEL (222 aa)). 44–51 (GRSGGGKS) lines the ATP pocket.

Belongs to the ABC transporter superfamily. Aliphatic sulfonates importer (TC 3.A.1.17.2) family. In terms of assembly, the complex is composed of two ATP-binding proteins (SsuB), two transmembrane proteins (SsuC) and a solute-binding protein (SsuA).

Its subcellular location is the cell inner membrane. The enzyme catalyses ATP + H2O + aliphatic sulfonate-[sulfonate-binding protein]Side 1 = ADP + phosphate + aliphatic sulfonateSide 2 + [sulfonate-binding protein]Side 1.. In terms of biological role, part of the ABC transporter complex SsuABC involved in aliphatic sulfonates import. Responsible for energy coupling to the transport system. This chain is Aliphatic sulfonates import ATP-binding protein SsuB, found in Shigella sonnei (strain Ss046).